Here is a 241-residue protein sequence, read N- to C-terminus: Leucyl/phenylalanyl-tRNA--protein transferase (241 aa).

Belongs to the L/F-transferase family.

The protein localises to the cytoplasm. It catalyses the reaction N-terminal L-lysyl-[protein] + L-leucyl-tRNA(Leu) = N-terminal L-leucyl-L-lysyl-[protein] + tRNA(Leu) + H(+). It carries out the reaction N-terminal L-arginyl-[protein] + L-leucyl-tRNA(Leu) = N-terminal L-leucyl-L-arginyl-[protein] + tRNA(Leu) + H(+). The enzyme catalyses L-phenylalanyl-tRNA(Phe) + an N-terminal L-alpha-aminoacyl-[protein] = an N-terminal L-phenylalanyl-L-alpha-aminoacyl-[protein] + tRNA(Phe). In terms of biological role, functions in the N-end rule pathway of protein degradation where it conjugates Leu, Phe and, less efficiently, Met from aminoacyl-tRNAs to the N-termini of proteins containing an N-terminal arginine or lysine. This chain is Leucyl/phenylalanyl-tRNA--protein transferase, found in Colwellia psychrerythraea (strain 34H / ATCC BAA-681) (Vibrio psychroerythus).